The following is a 181-amino-acid chain: Protein FAM237A (181 aa).

Residues 1–33 (MADPGNRGGIHRPLSFTCSLLIVGMCCVSPFFC) form the signal peptide. Leu113 carries the leucine amide modification. Positions 114-181 (GRRQLVGEEE…GKVNLEIKRK (68 aa)) are cleaved as a propeptide — removed in the mature form.

In terms of processing, the active form requires C-terminal amidation and disulfide bond formation. Expressed in the pituitary, testis, and heart and at lower levels in the brain.

Its subcellular location is the secreted. In terms of biological role, may be capable of activating GPR83 via the GNAQ signaling pathway. The protein is Protein FAM237A of Homo sapiens (Human).